The following is a 207-amino-acid chain: MKIIHKGLVEYLPTFEAMKTFNAGRNADTEDELWVVEHPPVFTQGLAGKPEHLLIRDDIPVVQIDRGGQITYHGPGQLVVYTMIDFKRRKTSVRNIVSALENSIIATLAEYGIEAAADPKRPGVYVGERKIASLGLRIKNGSVYHGLALNVNMDLSPFTHINPCGYAGMEMTQIADFVQPCPTPDEVAAKLTAHLETQFTPKADNNE.

A BPL/LPL catalytic domain is found at 27–203; sequence ADTEDELWVV…HLETQFTPKA (177 aa). Substrate-binding positions include 66–73, 133–135, and 146–148; these read RGGQITYH, SLG, and GLA. Residue cysteine 164 is the Acyl-thioester intermediate of the active site.

This sequence belongs to the LipB family.

It localises to the cytoplasm. The catalysed reaction is octanoyl-[ACP] + L-lysyl-[protein] = N(6)-octanoyl-L-lysyl-[protein] + holo-[ACP] + H(+). The protein operates within protein modification; protein lipoylation via endogenous pathway; protein N(6)-(lipoyl)lysine from octanoyl-[acyl-carrier-protein]: step 1/2. Catalyzes the transfer of endogenously produced octanoic acid from octanoyl-acyl-carrier-protein onto the lipoyl domains of lipoate-dependent enzymes. Lipoyl-ACP can also act as a substrate although octanoyl-ACP is likely to be the physiological substrate. This chain is Octanoyltransferase, found in Neisseria meningitidis serogroup B (strain ATCC BAA-335 / MC58).